Reading from the N-terminus, the 198-residue chain is Imidazole glycerol phosphate synthase subunit HisH (198 aa).

One can recognise a Glutamine amidotransferase type-1 domain in the interval 2-198 (KALLIDYGSG…ALARRYFEVL (197 aa)). The active-site Nucleophile is the C80. Catalysis depends on residues H176 and E178.

In terms of assembly, heterodimer of HisH and HisF.

It is found in the cytoplasm. The catalysed reaction is 5-[(5-phospho-1-deoxy-D-ribulos-1-ylimino)methylamino]-1-(5-phospho-beta-D-ribosyl)imidazole-4-carboxamide + L-glutamine = D-erythro-1-(imidazol-4-yl)glycerol 3-phosphate + 5-amino-1-(5-phospho-beta-D-ribosyl)imidazole-4-carboxamide + L-glutamate + H(+). The enzyme catalyses L-glutamine + H2O = L-glutamate + NH4(+). It participates in amino-acid biosynthesis; L-histidine biosynthesis; L-histidine from 5-phospho-alpha-D-ribose 1-diphosphate: step 5/9. In terms of biological role, IGPS catalyzes the conversion of PRFAR and glutamine to IGP, AICAR and glutamate. The HisH subunit catalyzes the hydrolysis of glutamine to glutamate and ammonia as part of the synthesis of IGP and AICAR. The resulting ammonia molecule is channeled to the active site of HisF. The polypeptide is Imidazole glycerol phosphate synthase subunit HisH (Thermus thermophilus (strain ATCC BAA-163 / DSM 7039 / HB27)).